A 164-amino-acid chain; its full sequence is Dihydrofolate reductase (164 aa).

In terms of domain architecture, DHFR spans 2 to 162 (NISIIVAMSQ…FYVTFKILKK (161 aa)). 6–8 (IVA) lines the substrate pocket. NADP(+)-binding positions include 7–8 (VA) and 15–20 (IGQKNS). D28 contacts substrate. Residue 44–47 (GRKT) participates in NADP(+) binding. Substrate is bound at residue R58. NADP(+) contacts are provided by residues 63 to 66 (LTRQ) and 96 to 101 (IGGSNL). T115 provides a ligand contact to substrate.

Belongs to the dihydrofolate reductase family.

The enzyme catalyses (6S)-5,6,7,8-tetrahydrofolate + NADP(+) = 7,8-dihydrofolate + NADPH + H(+). Its pathway is cofactor biosynthesis; tetrahydrofolate biosynthesis; 5,6,7,8-tetrahydrofolate from 7,8-dihydrofolate: step 1/1. Key enzyme in folate metabolism. Catalyzes an essential reaction for de novo glycine and purine synthesis, and for DNA precursor synthesis. In Buchnera aphidicola subsp. Baizongia pistaciae (strain Bp), this protein is Dihydrofolate reductase (folA).